Here is a 347-residue protein sequence, read N- to C-terminus: DnaJ homolog subfamily C member 22 (347 aa).

The TM2 domain occupies 4-50 (GLLMTYTLWAVGGPAGLHHLYLGRDSHALLWMLTLGGGGLGWLWEFW). 7 helical membrane-spanning segments follow: residues 5-25 (LLMT…HLYL), 32-52 (LLWM…FWML), 81-101 (FVAQ…SLSF), 105-125 (FYIV…AAVG), 135-155 (LGAA…ILPI), 186-206 (GLAY…HTAV), and 218-238 (FLSW…VLLL). The 71-residue stretch at 277-347 (LALQVFGLSE…GSWRWEETSF (71 aa)) folds into the J domain.

The protein resides in the membrane. Functionally, may function as a co-chaperone. This chain is DnaJ homolog subfamily C member 22 (DNAJC22), found in Bos taurus (Bovine).